Reading from the N-terminus, the 221-residue chain is Placenta growth factor (221 aa).

Positions 1–18 (MPVMRLFPCFLQLLAGLA) are cleaved as a signal peptide. N-linked (GlcNAc...) asparagine glycosylation is present at N33. Intrachain disulfides connect C52-C94, C83-C128, and C87-C130. The N-linked (GlcNAc...) asparagine glycan is linked to N101. Positions 175–221 (QSAVWPSSPVPEEIPRMHPGRNGKKQQRKPLREKMKPERCGDAVPRR) are disordered. A compositionally biased stretch (basic residues) spans 192–203 (HPGRNGKKQQRK). A heparin-binding region spans residues 193–213 (PGRNGKKQQRKPLREKMKPER). Over residues 204–221 (PLREKMKPERCGDAVPRR) the composition is skewed to basic and acidic residues.

This sequence belongs to the PDGF/VEGF growth factor family. As to quaternary structure, antiparallel homodimer; disulfide-linked. Also found as heterodimer with VEGFA/VEGF. Isoform PlGF-3 is found both as homodimer and as monomer. N-glycosylated. In terms of tissue distribution, while the three isoforms are present in most placental tissues, PlGF-2 is specific to early (8 week) placenta and only PlGF-1 is found in the colon and mammary carcinomas.

The protein localises to the secreted. Functionally, growth factor active in angiogenesis and endothelial cell growth, stimulating their proliferation and migration. It binds to the receptor FLT1/VEGFR-1. Isoform PlGF-2 binds NRP1/neuropilin-1 and NRP2/neuropilin-2 in a heparin-dependent manner. Also promotes cell tumor growth. This Homo sapiens (Human) protein is Placenta growth factor (PGF).